The following is a 239-amino-acid chain: Tetrahydromethanopterin S-methyltransferase subunit A (239 aa).

Residues 1 to 215 (MADKKAPAAG…EAAMIAKFNS (215 aa)) lie on the Cytoplasmic side of the membrane. H85 contacts 5-hydroxybenzimidazolylcob(I)amide. Residues 216–238 (GYYNGKIQGIAIGLFLSIVIFSL) traverse the membrane as a helical segment. Position 239 (L239) is a topological domain, extracellular.

This sequence belongs to the MtrA family. The complex is composed of 8 subunits; MtrA, MtrB, MtrC, MtrD, MtrE, MtrF, MtrG and MtrH. 5-hydroxybenzimidazolylcob(I)amide is required as a cofactor.

It is found in the cell membrane. The enzyme catalyses 5-methyl-5,6,7,8-tetrahydromethanopterin + coenzyme M + 2 Na(+)(in) = 5,6,7,8-tetrahydromethanopterin + methyl-coenzyme M + 2 Na(+)(out). Its pathway is one-carbon metabolism; methanogenesis from CO(2); methyl-coenzyme M from 5,10-methylene-5,6,7,8-tetrahydromethanopterin: step 2/2. Part of a complex that catalyzes the formation of methyl-coenzyme M and tetrahydromethanopterin from coenzyme M and methyl-tetrahydromethanopterin. This is an energy-conserving, sodium-ion translocating step. The chain is Tetrahydromethanopterin S-methyltransferase subunit A from Methanococcus maripaludis (strain DSM 14266 / JCM 13030 / NBRC 101832 / S2 / LL).